An 837-amino-acid polypeptide reads, in one-letter code: Neural cell adhesion molecule 2 (837 aa).

Positions 1–19 (MSLLLSFYLLGLLVSSGQA) are cleaved as a signal peptide. The Extracellular portion of the chain corresponds to 20 to 697 (LLQVTISLSK…PNIIKDTLFN (678 aa)). 5 Ig-like C2-type domains span residues 21–108 (LQVT…ATVV), 113–202 (QKLT…RDII), 208–297 (PPAI…AFLQ), 302–396 (PHII…MYLD), and 401–491 (PKFI…YILA). 2 cysteine pairs are disulfide-bonded: Cys-42/Cys-93 and Cys-136/Cys-186. Residues Asn-177 and Asn-219 are each glycosylated (N-linked (GlcNAc...) asparagine). Cys-232 and Cys-281 are oxidised to a cystine. Asn-309 carries an N-linked (GlcNAc...) asparagine glycan. A disulfide bridge links Cys-322 with Cys-380. N-linked (GlcNAc...) asparagine glycans are attached at residues Asn-406, Asn-419, Asn-445, Asn-474, and Asn-562. Residues Cys-422 and Cys-475 are joined by a disulfide bond. 2 consecutive Fibronectin type-III domains span residues 498-591 (SPYG…TLPV) and 593-688 (EPSP…PPKP). A helical membrane pass occupies residues 698-718 (GLGLGAVIGLGVAALLLILVV). The Cytoplasmic segment spans residues 719–837 (TDVSCFFIRQ…IQSKEDDSKA (119 aa)). Residues 764–785 (GSKEPIVEMRTEDERVTNHEDG) are compositionally biased toward basic and acidic residues. Positions 764-818 (GSKEPIVEMRTEDERVTNHEDGSPVNEPNETTPLTEPEKLPLKEEDGKEALNPET) are disordered. Ser-765 carries the post-translational modification Phosphoserine. Thr-780 bears the Phosphothreonine mark. Ser-786 is modified (phosphoserine). Positions 789–798 (NEPNETTPLT) are enriched in low complexity. The span at 799–814 (EPEKLPLKEEDGKEAL) shows a compositional bias: basic and acidic residues.

In terms of tissue distribution, expressed most strongly in adult and fetal brain.

The protein resides in the cell membrane. May play important roles in selective fasciculation and zone-to-zone projection of the primary olfactory axons. The polypeptide is Neural cell adhesion molecule 2 (NCAM2) (Homo sapiens (Human)).